A 265-amino-acid chain; its full sequence is Gamma-secretase subunit APH-1A (265 aa).

The Lumenal segment spans residues 1–2 (MG). Residues 3-23 (AAVFFGCTFVAFGPAFALFLI) form a helical membrane-spanning segment. Residues 24–31 (TVAGDPLR) are Cytoplasmic-facing. A helical membrane pass occupies residues 32-52 (VIILVAGAFFWLVSLLLASVV). At 53–68 (WFILVHVTDRSDARLQ) the chain is on the lumenal side. A helical membrane pass occupies residues 69–89 (YGLLIFGAAVSVLLQEVFRFA). Topologically, residues 90–118 (YYKLLKKADEGLASLSEDGRSPISIRQMA) are cytoplasmic. The helical transmembrane segment at 119–139 (YVSGLSFGIISGVFSVINILA) threads the bilayer. Topologically, residues 140-158 (DALGPGVVGIHGDSPYYFL) are lumenal. A helical transmembrane segment spans residues 159-179 (TSAFLTAAIILLHTFWGVVFF). Topologically, residues 180–186 (DACERRR) are cytoplasmic. Residues 187-207 (YWALGLVVGSHLLTSGLTFLN) form a helical membrane-spanning segment. Residues 208–213 (PWYEAS) are Lumenal-facing. Residues 214–234 (LLPIYAVTVSMGLWAFITAGG) traverse the membrane as a helical segment. Residues 235–265 (SLRSIQRSLLCRRQEDSRVMVYSALRIPPED) lie on the Cytoplasmic side of the membrane.

This sequence belongs to the APH-1 family. The functional gamma-secretase complex is composed of at least four polypeptides: a presenilin homodimer (PSEN1 or PSEN2), nicastrin (NCSTN), APH1 (APH1A or APH1B) and PSENEN/PEN2. Widely expressed. Expressed in leukocytes, lung, placenta, small intestine, liver, kidney, spleen thymus, skeletal muscle, heart and brain. Isoform 1 and isoform 2 are nearly expressed at the same level.

Its subcellular location is the endoplasmic reticulum membrane. The protein resides in the golgi apparatus. It is found in the golgi stack membrane. Its function is as follows. Non-catalytic subunit of the gamma-secretase complex, an endoprotease complex that catalyzes the intramembrane cleavage of integral membrane proteins such as Notch receptors and APP (amyloid-beta precursor protein). Required for normal gamma-secretase assembly. The gamma-secretase complex plays a role in Notch and Wnt signaling cascades and regulation of downstream processes via its role in processing key regulatory proteins, and by regulating cytosolic CTNNB1 levels. This is Gamma-secretase subunit APH-1A (APH1A) from Homo sapiens (Human).